Consider the following 336-residue polypeptide: HTH-type transcriptional repressor PurR (336 aa).

The 55-residue stretch at 2 to 56 (ATIKDVAKMAGVSTTTVSHVINKTRFVAKDTEEAVLSAIKQLNYSPSAVARSLKV) folds into the HTH lacI-type domain. A DNA-binding region (H-T-H motif) is located at residues 4 to 23 (IKDVAKMAGVSTTTVSHVIN). The DNA-binding element occupies 48–56 (SAVARSLKV). 5 residues coordinate hypoxanthine: Tyr73, Lys188, Thr190, Phe219, and Asp273.

Homodimer.

It functions in the pathway purine metabolism; purine nucleotide biosynthesis [regulation]. In terms of biological role, is the main repressor of the genes involved in the de novo synthesis of purine nucleotides, regulating purB, purC, purEK, purF, purHD, purL, purMN and guaBA expression. PurR is allosterically activated to bind its cognate DNA by binding the purine corepressors, hypoxanthine or guanine, thereby effecting transcription repression. The chain is HTH-type transcriptional repressor PurR from Haemophilus influenzae (strain ATCC 51907 / DSM 11121 / KW20 / Rd).